Consider the following 170-residue polypeptide: Peptide deformylase 1 (170 aa).

Fe cation is bound by residues Cys-91 and His-133. Residue Glu-134 is part of the active site. His-137 is a Fe cation binding site.

Belongs to the polypeptide deformylase family. Fe(2+) is required as a cofactor.

It catalyses the reaction N-terminal N-formyl-L-methionyl-[peptide] + H2O = N-terminal L-methionyl-[peptide] + formate. In terms of biological role, removes the formyl group from the N-terminal Met of newly synthesized proteins. Requires at least a dipeptide for an efficient rate of reaction. N-terminal L-methionine is a prerequisite for activity but the enzyme has broad specificity at other positions. The sequence is that of Peptide deformylase 1 from Vibrio vulnificus (strain CMCP6).